The chain runs to 848 residues: Adenylate cyclase (848 aa).

The interval 1–535 (MYLYIETLKQ…DISHHFPLRL (535 aa)) is catalytic. The interval 541–848 (KALYSPCEIR…SQPAQQFQLH (308 aa)) is regulatory.

Belongs to the adenylyl cyclase class-1 family.

It is found in the cytoplasm. The enzyme catalyses ATP = 3',5'-cyclic AMP + diphosphate. With respect to regulation, the regulatory domain is involved in the regulation of cyclase activity by the carbon source. The sequence is that of Adenylate cyclase (cya) from Yersinia intermedia.